Consider the following 320-residue polypeptide: ATP-dependent 6-phosphofructokinase (320 aa).

Residue Gly-11 coordinates ATP. Residue 21–25 (RAVTK) participates in ADP binding. ATP contacts are provided by residues 72 to 73 (RF) and 102 to 105 (GDGS). Asp-103 lines the Mg(2+) pocket. Position 125–127 (125–127 (TID)) interacts with substrate. The active-site Proton acceptor is Asp-127. ADP is bound at residue Arg-154. Substrate is bound by residues Arg-162 and 169–171 (MGR). ADP-binding positions include 185 to 187 (GAD) and 213 to 215 (KDH). Substrate is bound by residues Glu-222, Arg-243, and 249-252 (HMQR).

Belongs to the phosphofructokinase type A (PFKA) family. ATP-dependent PFK group I subfamily. Prokaryotic clade 'B1' sub-subfamily. Homotetramer. Mg(2+) serves as cofactor.

Its subcellular location is the cytoplasm. It catalyses the reaction beta-D-fructose 6-phosphate + ATP = beta-D-fructose 1,6-bisphosphate + ADP + H(+). Its pathway is carbohydrate degradation; glycolysis; D-glyceraldehyde 3-phosphate and glycerone phosphate from D-glucose: step 3/4. Its activity is regulated as follows. Allosterically activated by ADP and other diphosphonucleosides, and allosterically inhibited by phosphoenolpyruvate. In terms of biological role, catalyzes the phosphorylation of D-fructose 6-phosphate to fructose 1,6-bisphosphate by ATP, the first committing step of glycolysis. The sequence is that of ATP-dependent 6-phosphofructokinase from Lactobacillus acidophilus (strain ATCC 700396 / NCK56 / N2 / NCFM).